Here is a 619-residue protein sequence, read N- to C-terminus: Threonine--tRNA ligase (619 aa).

Residues 1-143 (MQLLLIHSDF…SRSIRIGEGE (143 aa)) form an editing domain region. A catalytic region spans residues 201 to 500 (PHVELMRRLE…AANGGLPMLP (300 aa)). Residues Cys-293, His-345, and His-469 each contribute to the Zn(2+) site.

It belongs to the class-II aminoacyl-tRNA synthetase family. In terms of assembly, homodimer. The cofactor is Zn(2+).

The protein resides in the cytoplasm. It catalyses the reaction tRNA(Thr) + L-threonine + ATP = L-threonyl-tRNA(Thr) + AMP + diphosphate + H(+). Catalyzes the attachment of threonine to tRNA(Thr) in a two-step reaction: L-threonine is first activated by ATP to form Thr-AMP and then transferred to the acceptor end of tRNA(Thr). Also edits incorrectly charged L-seryl-tRNA(Thr). This chain is Threonine--tRNA ligase, found in Methanothrix thermoacetophila (strain DSM 6194 / JCM 14653 / NBRC 101360 / PT) (Methanosaeta thermophila).